Here is a 236-residue protein sequence, read N- to C-terminus: MASMAFSTTFFTPLRDFNQPRTNSTPSTSLPFTKSSIASSKSPFFQLGFSQQASSNFPIVPSKTRSFSVNAKAIKDKTIYDFTVKDIDKKDVSLSKFKGKVLLIVNVASRCGLTSSNYTELSHLYENFKNKGLEVLAFPCNQFGMQEPGSNEEIKQFACTKFKAEFPIFDKVDVNGPFTAPVYQFLKSSSGGFFGDIVKWNFEKFLVDKNGKVVERYPPTTSPFQIEKDIQKLLAA.

Residues 1–64 (MASMAFSTTF…SNFPIVPSKT (64 aa)) constitute a chloroplast transit peptide. Residue Cys-111 is part of the active site.

This sequence belongs to the glutathione peroxidase family.

It is found in the plastid. Its subcellular location is the chloroplast stroma. The catalysed reaction is a hydroperoxy polyunsaturated fatty acid + 2 glutathione = a hydroxy polyunsaturated fatty acid + glutathione disulfide + H2O. Its function is as follows. Protects cells and enzymes from oxidative damage, by catalyzing the reduction of hydrogen peroxide, lipid peroxides and organic hydroperoxide, by glutathione. This is Phospholipid hydroperoxide glutathione peroxidase, chloroplastic from Pisum sativum (Garden pea).